Consider the following 143-residue polypeptide: Nitrosuccinic acid decarboxylase npaB (143 aa).

The protein belongs to the carboxymuconolactone decarboxylase family. It depends on Mg(2+) as a cofactor.

The protein operates within mycotoxin biosynthesis. Nitrosuccinic acid decarboxylase; part of the gene cluster that mediates the biosynthesis of the deadly neurotoxic nitroalkane 3-nitropropanoic acid (3-NPA) that acts as an antimetabolite of succinate and irreversibly inhibits succinate dehydrogenase and disrupts mitochondrial oxidative phosphorylation. NpaB facilitates decarboxylation of nitrosuccinic acid produced by the nitrosuccinic acid synthase npaA to yield the final product of the cluster, the lethal mycotoxin 3-NPA. This Metarhizium robertsii (strain ARSEF 23 / ATCC MYA-3075) (Metarhizium anisopliae (strain ARSEF 23)) protein is Nitrosuccinic acid decarboxylase npaB.